Here is a 113-residue protein sequence, read N- to C-terminus: Beta-defensin 112 (113 aa).

3 disulfide bridges follow: Cys54–Cys82, Cys61–Cys75, and Cys65–Cys83.

Belongs to the beta-defensin family.

It is found in the secreted. In terms of biological role, has antibacterial activity. In Pan troglodytes (Chimpanzee), this protein is Beta-defensin 112 (DEFB112).